Consider the following 78-residue polypeptide: Disintegrin DisBa-01 (78 aa).

One can recognise a Disintegrin domain in the interval 1 to 78 (GNELLEAGEE…AGCPRNPFHA (78 aa)). 6 disulfides stabilise this stretch: cysteine 11–cysteine 26, cysteine 13–cysteine 21, cysteine 20–cysteine 43, cysteine 34–cysteine 40, cysteine 39–cysteine 64, and cysteine 52–cysteine 71. The Cell attachment site signature appears at 56–58 (RGD).

It belongs to the venom metalloproteinase (M12B) family. P-II subfamily. P-IIa sub-subfamily. Monomer. Expressed by the venom gland.

Its subcellular location is the secreted. In terms of biological role, this recombinant disintegrin antagonizes integrins alpha-IIb/beta-3 (ITGA2B/ITGB3) and alpha-V/beta-3 (ITGAV/ITGB3). On ITGA2B/ITGB3, it interferes with the outside/-in phosphorylation of the focal adhesion kinase (PTK2 / FAK) downstream of the integrin. It strongly inhibits platelet aggregation induced by ADP, thrombin, and collagen, abolishes and reverses dynamic platelet recruitment to immobilized fibrinogen. In vivo, it induces a dramatic increase in the tail bleeding time, and has a strong antithrombotic activity. On ITGAV/ITGB3, it inhibits the adhesion of ITGAV/ITGB3-expressing human microvascular endothelial cell line and murine melanoma cell line to vitronectin (IC(50) are 555 nM and 225 nM, respectively), and transiently inhibits their proliferation without direct cell toxicity. In vivo, it potently inhibits angiogenesis and metastasis, probably due to its capability to strongly inhibit the expression of VEGF and its receptors in endothelial cells. It also inhibits tumor cell migration in vitro. This Bothrops alternatus (Urutu) protein is Disintegrin DisBa-01.